The sequence spans 685 residues: Phenoloxidase subunit 1 (685 aa).

Cu cation-binding residues include His-209, His-213, and His-239. Glu-351 (proton acceptor) is an active-site residue. 3 residues coordinate Cu cation: His-366, His-370, and His-406. Cystine bridges form between Cys-580–Cys-622 and Cys-582–Cys-629.

Heterodimer. Forms a complex with an interleukin 1-like protein as a consequence of a host defense response. Cu(2+) serves as cofactor. In terms of processing, the N-terminus is blocked. As to expression, synthesized by oenocytoids, a type of hemocyte, and released into the hemolymph plasma.

The protein resides in the secreted. It carries out the reaction 2 L-dopa + O2 = 2 L-dopaquinone + 2 H2O. The enzyme catalyses L-tyrosine + O2 = L-dopaquinone + H2O. Its activity is regulated as follows. Activated by immulectin and lipopolysaccharide. This is a copper-containing oxidase that functions in the formation of pigments such as melanins and other polyphenolic compounds. Catalyzes the rate-limiting conversions of tyrosine to DOPA, DOPA to DOPA-quinone and possibly 5,6 dihydroxyindole to indole-5'6 quinone. Binds to the surface of hemocytes and is involved in hemocyte melanization. In Manduca sexta (Tobacco hawkmoth), this protein is Phenoloxidase subunit 1.